A 327-amino-acid chain; its full sequence is Phenylalanine--tRNA ligase alpha subunit (327 aa).

Mg(2+) is bound at residue E252.

This sequence belongs to the class-II aminoacyl-tRNA synthetase family. Phe-tRNA synthetase alpha subunit type 1 subfamily. Tetramer of two alpha and two beta subunits. It depends on Mg(2+) as a cofactor.

The protein resides in the cytoplasm. It carries out the reaction tRNA(Phe) + L-phenylalanine + ATP = L-phenylalanyl-tRNA(Phe) + AMP + diphosphate + H(+). This is Phenylalanine--tRNA ligase alpha subunit from Yersinia pestis bv. Antiqua (strain Antiqua).